The following is a 930-amino-acid chain: RNA-binding protein 10 (930 aa).

Basic and acidic residues-rich tracts occupy residues 1 to 14 (MEYERRGGRGDRTG) and 21 to 45 (RSQDDGGENRSRDHDYRDMDYRSYP). The segment at 1–127 (MEYERRGGRG…EEDEEEEEKA (127 aa)) is disordered. Residue Glu2 is modified to N-acetylserine. Residues Arg30, Ser61, and Ser89 each carry the phosphoserine modification. Residues 59–70 (DSSEEQSAEDSY) are compositionally biased toward acidic residues. Over residues 80-89 (RRRRRRHRHS) the composition is skewed to basic residues. Basic and acidic residues predominate over residues 98–111 (RDGDYRDQDYRTEQ). The segment covering 112-125 (GEEEEEEEDEEEEE) has biased composition (acidic residues). In terms of domain architecture, RRM 1 spans 129–209 (NIVMLRMLPQ…QKVSMHYSDP (81 aa)). The RanBP2-type zinc-finger motif lies at 212–242 (KINEDWLCNKCGVQNFKRREKCFKCGVPKSE). An RRM 2 domain is found at 300 to 384 (DTIILRNLNP…KTINVEFAKG (85 aa)). Lys383 carries the N6-acetyllysine modification. 4 disordered regions span residues 466 to 524 (PGIT…AANS), 537 to 569 (SELQSPTHPSSALPPATSPTAQESYSQYPVPDV), 620 to 685 (EQSA…DERR), and 700 to 753 (KGAL…EEKL). The span at 508–524 (YQQSAEASSSQGTAANS) shows a compositional bias: polar residues. Residues 541 to 557 (SPTHPSSALPPATSPTA) show a composition bias toward low complexity. 3 stretches are compositionally biased toward basic and acidic residues: residues 623–639 (ADGHKETGAPSKEGKEK), 653–669 (KDMERWARSLNKQKENF), and 700–709 (KGALAERQHT). 5 positions are modified to phosphoserine: Ser718, Ser723, Ser733, Ser736, and Ser738. Residues 743–753 (ERGGPEREEKL) are compositionally biased toward basic and acidic residues. The segment at 759–784 (LACLLCRRQFPSKEALIRHQQLSGLH) adopts a C2H2-type; atypical zinc-finger fold. Ser781 and Ser797 each carry phosphoserine. Positions 815–826 (RDRAAERREKYG) are enriched in basic and acidic residues. The disordered stretch occupies residues 815–861 (RDRAAERREKYGIPEPPEPKRRKYGGISTASVDFEQPTRDGLGSDNI). A Phosphoserine modification is found at Ser845. The 47-residue stretch at 858–904 (SDNIGSRMLQAMGWKEGSGLGRKKQGIVTPIEAQTRVRGSGLGARGS) folds into the G-patch domain. Arg902 carries the post-translational modification Omega-N-methylarginine.

Associates with the spliceosome. Component of a large chromatin remodeling complex, at least composed of MYSM1, PCAF, RBM10 and KIF11/TRIP5.

The protein localises to the nucleus. Binds to ssRNA containing the consensus sequence 5'-AGGUAA-3'. May be involved in post-transcriptional processing, most probably in mRNA splicing. Binds to RNA homopolymers, with a preference for poly(G) and poly(U) and little for poly(A). May bind to specific miRNA hairpins. In Homo sapiens (Human), this protein is RNA-binding protein 10.